Reading from the N-terminus, the 100-residue chain is Large ribosomal subunit protein bL21 (100 aa).

It belongs to the bacterial ribosomal protein bL21 family. Part of the 50S ribosomal subunit. Contacts protein L20.

Its function is as follows. This protein binds to 23S rRNA in the presence of protein L20. The polypeptide is Large ribosomal subunit protein bL21 (Wolbachia sp. subsp. Brugia malayi (strain TRS)).